An 866-amino-acid polypeptide reads, in one-letter code: Retinoblastoma-related protein 2 (866 aa).

A domain A region spans residues Thr274–Leu475. The segment at Thr274–Pro721 is pocket. The spacer stretch occupies residues Ile476–Asp593. A disordered region spans residues Leu513–Gln551. The span at Ala523 to Asn539 shows a compositional bias: basic and acidic residues. Positions Val594 to Pro721 are domain B. 2 disordered regions span residues Thr731–Asn754 and Ser839–Thr866. Positions Gly841–Leu850 are enriched in polar residues.

This sequence belongs to the retinoblastoma protein (RB) family. As to expression, ubiquitous.

The protein resides in the nucleus. Its function is as follows. Regulator of biological processes that recruits a histone deacetylase to control gene transcription. May play a role in the entry into mitosis, negatively regulating the cell proliferation. Formation of stable complexes with geminiviridae replication-associated proteins may create a cellular environment which favors viral DNA replication. The sequence is that of Retinoblastoma-related protein 2 (RBR2) from Zea mays (Maize).